The sequence spans 541 residues: Protein wntless homolog (541 aa).

Over 1 to 15 (MAGAIIENMSTKKLC) the chain is Cytoplasmic. A helical transmembrane segment spans residues 16 to 36 (IVGGILLVFQIVAFLVGGLIA). The Lumenal portion of the chain corresponds to 37-232 (PAPTTAVPYT…GIHQNGGFTK (196 aa)). The tract at residues 101 to 232 (MEMSPWFQFM…GIHQNGGFTK (132 aa)) is interaction with Wnt proteins. Residues 233-253 (VWFAMKTFLTPSIFIIMVWYW) form a helical membrane-spanning segment. The Cytoplasmic segment spans residues 254–268 (RRITMMSRPPVLLEK). The chain crosses the membrane as a helical span at residues 269-289 (VIFALGISMTFINIPVEWFSI). Residues 290-303 (GFDWTWMLLFGDIR) are Lumenal-facing. Residues 304–324 (QGIFYAMLLSFWIIFCGEHMM) form a helical membrane-spanning segment. Residues 325 to 331 (DQHERNH) lie on the Cytoplasmic side of the membrane. Residues 332–352 (IAGYWKQVGPIAVGSFCLFIF) traverse the membrane as a helical segment. The Lumenal segment spans residues 353–380 (DMCERGVQLTNPFYSIWTTDVGTELAMA). A helical membrane pass occupies residues 381 to 401 (FIIVAGICLCLYFLFLCFMVF). Topologically, residues 402-431 (QVFRNISGKQSSLPAMSKVRRLHYEGLIFR) are cytoplasmic. A helical transmembrane segment spans residues 432-452 (FKFLMLITLACAAMTVIFFIV). The Lumenal portion of the chain corresponds to 453 to 471 (SQVSEGHWKWGGVTVQVSS). The helical transmembrane segment at 472–492 (AFFTGIYGMWNLYVFALMFLY) threads the bilayer. Residues 493–541 (APSHKNYGEDQSNGDLGVHSGEELQLTTTITHVDGPTEIYKLTRKEAQE) lie on the Cytoplasmic side of the membrane.

Belongs to the wntless family. Interacts with WNT3A. Interacts with WNT1, WNT3 and WNT5. In terms of processing, N-glycosylated. In terms of tissue distribution, expressed in the brain, skeletal muscle, heart muscle, lung, gut, liver, and kidney (at protein level). In the brain, expressed in the cortex, striatum, hippocampus and to a lesser extent in the cerebellum (at protein level). Expressed in kidney, lung, skin, intestine, brain, spinal cord, skeleton, eyes, excretion glands, tooth and palatal shelves. In the cerebellum, expressed in Purkinje cells.

It is found in the golgi apparatus membrane. It localises to the cytoplasmic vesicle membrane. Its subcellular location is the cell membrane. The protein localises to the endoplasmic reticulum membrane. The protein resides in the early endosome membrane. In terms of biological role, regulates Wnt proteins sorting and secretion in a feedback regulatory mechanism. This reciprocal interaction plays a key role in the regulation of expression, subcellular location, binding and organelle-specific association of Wnt proteins. Also plays an important role in establishment of the anterior-posterior body axis formation during development. This is Protein wntless homolog (Wls) from Mus musculus (Mouse).